A 131-amino-acid chain; its full sequence is Large ribosomal subunit protein bL19 (131 aa).

Belongs to the bacterial ribosomal protein bL19 family.

This protein is located at the 30S-50S ribosomal subunit interface and may play a role in the structure and function of the aminoacyl-tRNA binding site. The protein is Large ribosomal subunit protein bL19 of Rhodopseudomonas palustris (strain BisA53).